The sequence spans 216 residues: MPLYVIDKPLTLHILTQLRDKNTDQINFRKNLVRLGRILGYEIANTLDYEIVEVETPLGARTKGIDITDLNNIVIINILRAAVPLVEGLLKAFPKARQGVIGASRVEVDGKEVPKDMDVYIYYKKIPNIRAKVDNVIIADPMIATASTMLKVLEEVVRANPKRIYIVSIISSEYGANKILSKYPFIYLFTVTIDPELNNKGYILPGLGDAGDRAFG.

30 to 34 contacts GTP; it reads KNLVR. 5-phospho-alpha-D-ribose 1-diphosphate-binding positions include R80, R105, and 140–148; that span reads DPMIATAST. Uracil-binding positions include I203 and 208–210; that span reads GDA. D209 serves as a coordination point for 5-phospho-alpha-D-ribose 1-diphosphate.

Belongs to the UPRTase family. The cofactor is Mg(2+).

The catalysed reaction is UMP + diphosphate = 5-phospho-alpha-D-ribose 1-diphosphate + uracil. It functions in the pathway pyrimidine metabolism; UMP biosynthesis via salvage pathway; UMP from uracil: step 1/1. Its activity is regulated as follows. Allosterically activated by GTP. Its function is as follows. Catalyzes the conversion of uracil and 5-phospho-alpha-D-ribose 1-diphosphate (PRPP) to UMP and diphosphate. This Saccharolobus islandicus (strain Y.N.15.51 / Yellowstone #2) (Sulfolobus islandicus) protein is Uracil phosphoribosyltransferase.